The chain runs to 179 residues: Large ribosomal subunit protein uL6 (179 aa).

The protein belongs to the universal ribosomal protein uL6 family. As to quaternary structure, part of the 50S ribosomal subunit.

Its function is as follows. This protein binds to the 23S rRNA, and is important in its secondary structure. It is located near the subunit interface in the base of the L7/L12 stalk, and near the tRNA binding site of the peptidyltransferase center. The sequence is that of Large ribosomal subunit protein uL6 from Mycolicibacterium vanbaalenii (strain DSM 7251 / JCM 13017 / BCRC 16820 / KCTC 9966 / NRRL B-24157 / PYR-1) (Mycobacterium vanbaalenii).